Reading from the N-terminus, the 1086-residue chain is Calcium-transporting ATPase 9, plasma membrane-type (1086 aa).

The segment covering 1–15 (MSTSSSNGLLLTSMS) has biased composition (low complexity). Positions 1 to 50 (MSTSSSNGLLLTSMSGRHDDMEAGSAKTEEHSDHEELQHDPDDPFDIDNT) are disordered. Topologically, residues 1–194 (MSTSSSNGLL…NTYPKKKGKN (194 aa)) are cytoplasmic. Over residues 16–42 (GRHDDMEAGSAKTEEHSDHEELQHDPD) the composition is skewed to basic and acidic residues. The interaction with calmodulin stretch occupies residues 57-68 (SLRRWRQAALVL). The helical transmembrane segment at 195–215 (FFMFLWEAWQDLTLIILIIAA) threads the bilayer. Topologically, residues 216-233 (VTSLALGIKTEGLKEGWL) are lumenal. The chain crosses the membrane as a helical span at residues 234-254 (DGGSIAFAVLLVIVVTAVSDY). Topologically, residues 255–382 (RQSLQFQNLN…GEETPLQVRL (128 aa)) are cytoplasmic. The helical transmembrane segment at 383-402 (NGLATFIGIVGLSVALVVLV) threads the bilayer. At 403–439 (ALLVRYFTGTTQDTNGATQFIKGTTSISDIVDDCVKI) the chain is on the lumenal side. A helical membrane pass occupies residues 440–457 (FTIAVTIVVVAVPEGLPL). At 458 to 857 (AVTLTLAYSM…RWGRSVYANI (400 aa)) the chain is on the cytoplasmic side. The active-site 4-aspartylphosphate intermediate is the aspartate 495. Mg(2+) is bound by residues aspartate 802 and aspartate 806. The chain crosses the membrane as a helical span at residues 858-876 (QKFIQFQLTVNVAALIINV). The Lumenal segment spans residues 877–887 (VAAMSSGDVPL). A helical transmembrane segment spans residues 888 to 908 (KAVQLLWVNLIMDTLGALALA). Topologically, residues 909–928 (TEPPTDHLMHRTPVGRREPL) are cytoplasmic. A helical membrane pass occupies residues 929 to 951 (ITNIMWRNLLVQSFYQVAVLLVL). At 952-963 (NFAGLSILGLNH) the chain is on the lumenal side. A helical membrane pass occupies residues 964–988 (ENHAHAVEVKNTMIFNAFVMCQIFN). Over 989–1006 (EFNARKPDEMNVFRGVNK) the chain is Cytoplasmic. A helical membrane pass occupies residues 1007 to 1028 (NPLFVAIVGVTFILQIIIVTFL). The Lumenal portion of the chain corresponds to 1029–1038 (GKFAHTVRLG). The chain crosses the membrane as a helical span at residues 1039 to 1060 (WQLWLASIIIGLVSWPLAIVGK). At 1061–1086 (LIPVPKTPMSVYFKKPFRKYKASRNA) the chain is on the cytoplasmic side.

This sequence belongs to the cation transport ATPase (P-type) (TC 3.A.3) family. Type IIB subfamily.

It is found in the membrane. It carries out the reaction Ca(2+)(in) + ATP + H2O = Ca(2+)(out) + ADP + phosphate + H(+). With respect to regulation, activated by calmodulin. Its function is as follows. This magnesium-dependent enzyme catalyzes the hydrolysis of ATP coupled with the translocation of calcium from the cytosol out of the cell or into organelles. This Arabidopsis thaliana (Mouse-ear cress) protein is Calcium-transporting ATPase 9, plasma membrane-type (ACA9).